We begin with the raw amino-acid sequence, 164 residues long: V-type proton ATPase 16 kDa proteolipid subunit (164 aa).

The Lumenal portion of the chain corresponds to 1–9; that stretch reads MASFSGDET. A helical transmembrane segment spans residues 10–32; it reads APFFGFLGAAAALVFSCMGAAYG. The Cytoplasmic segment spans residues 33 to 54; it reads TAKSGVGVASMGVMRPELVMKS. Residues 55–75 form a helical membrane-spanning segment; that stretch reads IVPVVMAGVLGIYGLIIAVII. At 76 to 94 the chain is on the lumenal side; the sequence is STGINPKAKSYYLFDGYAH. The chain crosses the membrane as a helical span at residues 95–116; it reads LSSGLACGLAGLSAGMAIGIVG. The Cytoplasmic segment spans residues 117-128; the sequence is DAGVRANAQQPK. The helical transmembrane segment at 129–154 threads the bilayer; it reads LFVGMILILIFAEALALYGLIVGIIL. Over 155 to 164 the chain is Lumenal; the sequence is SSRAGQSRAD.

It belongs to the V-ATPase proteolipid subunit family. In terms of assembly, V-ATPase is a heteromultimeric enzyme composed of a peripheral catalytic V1 complex (main components: subunits A, B, C, D, E, and F) attached to an integral membrane V0 proton pore complex (main component: the proteolipid protein; which is present as a hexamer that forms the proton-conducting pore).

Its subcellular location is the vacuole membrane. Its function is as follows. Proton-conducting pore forming subunit of the membrane integral V0 complex of vacuolar ATPase. V-ATPase is responsible for acidifying a variety of intracellular compartments in eukaryotic cells. The chain is V-type proton ATPase 16 kDa proteolipid subunit from Vigna radiata var. radiata (Mung bean).